The following is a 292-amino-acid chain: Histamine N-methyltransferase (292 aa).

Glu28 is a binding site for substrate. S-adenosyl-L-methionine contacts are provided by Gly60, Glu89, Gln94, Ser120, and Ile142. Asn283 is a binding site for substrate.

It belongs to the class I-like SAM-binding methyltransferase superfamily. HNMT family. Monomer.

The protein localises to the cytoplasm. It catalyses the reaction histamine + S-adenosyl-L-methionine = N(tau)-methylhistamine + S-adenosyl-L-homocysteine + H(+). Functionally, inactivates histamine by N-methylation. Plays an important role in degrading histamine and in regulating the airway response to histamine. This chain is Histamine N-methyltransferase (HNMT), found in Homo sapiens (Human).